A 243-amino-acid polypeptide reads, in one-letter code: Ribosomal RNA small subunit methyltransferase J (243 aa).

S-adenosyl-L-methionine is bound by residues 112–113 (ER) and D164.

Belongs to the methyltransferase superfamily. RsmJ family.

The protein resides in the cytoplasm. The enzyme catalyses guanosine(1516) in 16S rRNA + S-adenosyl-L-methionine = N(2)-methylguanosine(1516) in 16S rRNA + S-adenosyl-L-homocysteine + H(+). In terms of biological role, specifically methylates the guanosine in position 1516 of 16S rRNA. The chain is Ribosomal RNA small subunit methyltransferase J from Legionella pneumophila subsp. pneumophila (strain Philadelphia 1 / ATCC 33152 / DSM 7513).